Consider the following 180-residue polypeptide: Large ribosomal subunit protein uL5 (180 aa).

The protein belongs to the universal ribosomal protein uL5 family. In terms of assembly, part of the 50S ribosomal subunit; part of the 5S rRNA/L5/L18/L25 subcomplex. Contacts the 5S rRNA and the P site tRNA. Forms a bridge to the 30S subunit in the 70S ribosome.

This is one of the proteins that bind and probably mediate the attachment of the 5S RNA into the large ribosomal subunit, where it forms part of the central protuberance. In the 70S ribosome it contacts protein S13 of the 30S subunit (bridge B1b), connecting the 2 subunits; this bridge is implicated in subunit movement. Contacts the P site tRNA; the 5S rRNA and some of its associated proteins might help stabilize positioning of ribosome-bound tRNAs. In Lactobacillus acidophilus (strain ATCC 700396 / NCK56 / N2 / NCFM), this protein is Large ribosomal subunit protein uL5.